Here is a 1487-residue protein sequence, read N- to C-terminus: Collagen alpha-1(II) chain (1487 aa).

A signal peptide spans 1–25; the sequence is MIRLGAPQTLVLLTLLVAAVLRCHG. The propeptide at 26-181 is N-terminal propeptide; the sequence is QDVQKAGSCV…PPGLGGNFAA (156 aa). A VWFC domain is found at 32–90; the sequence is GSCVQDGQRYNDKDVWKPEPCRICVCDTGTVLCDDIICEDMKDCLSPETPFGECCPICS. Residues 96–1234 form a disordered region; that stretch reads ASGQPGPKGQ…GLGQREKGPD (1139 aa). Composition is skewed to basic and acidic residues over residues 105 to 116 and 133 to 154; these read QKGEPGDIKDIV and PRGD…RDGE. A compositionally biased stretch (pro residues) spans 158 to 173; it reads PGNPGPPGPPGPPGPP. The residue at position 190 (Lys190) is a 5-hydroxylysine. The O-linked (Gal...) hydroxylysine glycan is linked to Lys190. A compositionally biased stretch (low complexity) spans 192–203; sequence GGAQMGVMQGPM. Residues 201 to 1214 are triple-helical region; the sequence is GPMGPMGPRG…PGPPGPPGPP (1014 aa). Residues 208–217 are compositionally biased toward pro residues; the sequence is PRGPPGPAGA. Pro212, Pro218, Pro230, Pro233, Pro245, Pro248, Pro251, Pro260, Pro269, Pro278, Pro281, and Pro284 each carry hydroxyproline. Positions 218 to 239 are enriched in low complexity; the sequence is PGPQGFQGNPGEPGEPGVSGPM. A compositionally biased stretch (pro residues) spans 241 to 250; sequence PRGPPGPPGK. The span at 251 to 265 shows a compositional bias: basic and acidic residues; the sequence is PGDDGEAGKPGKSGE. Residue Lys287 is modified to 5-hydroxylysine. An O-linked (Gal...) hydroxylysine glycan is attached at Lys287. Pro293 is modified (hydroxyproline). 5-hydroxylysine is present on Lys299. Lys299 carries an O-linked (Gal...) hydroxylysine glycan. Pro305 carries the hydroxyproline modification. Lys308 bears the 5-hydroxylysine mark. The O-linked (Gal...) hydroxylysine glycan is linked to Lys308. Residues 310–320 are compositionally biased toward low complexity; the sequence is ESGSPGENGSP. Residues Pro314, Pro320, Pro329, Pro350, Pro356, Pro365, Pro368, and Pro371 each carry the hydroxyproline modification. The segment covering 335–350 has biased composition (low complexity); that stretch reads TGPAGAAGARGNDGQP. Residues 360–369 show a composition bias toward gly residues; the sequence is GPAGGPGFPG. Low complexity-rich tracts occupy residues 370–382 and 391–431; these read APGA…PTGA and PRGE…AGAP. At Lys374 the chain carries 5-hydroxylysine. Lys374 is a glycosylation site (O-linked (Gal...) hydroxylysine). Residues Pro395, Pro398, Pro401, Pro410, and Pro416 each carry the hydroxyproline modification. Lys419 carries the 5-hydroxylysine modification. Hydroxyproline occurs at positions 425, 431, 434, and 440. The span at 433–442 shows a compositional bias: pro residues; the sequence is FPGPRGPPGP. Lys452 carries the 5-hydroxylysine modification. Pro458 is modified (hydroxyproline). 5-hydroxylysine occurs at positions 464 and 470. A hydroxyproline mark is found at Pro473, Pro482, Pro497, Pro506, Pro512, and Pro518. Residue Lys527 is modified to 5-hydroxylysine. Pro530 bears the Hydroxyproline mark. Lys542 carries the 5-hydroxylysine modification. Residues Pro551, Pro557, Pro566, Pro581, Pro587, Pro590, Pro599, and Pro605 each carry the hydroxyproline modification. A 5-hydroxylysine modification is found at Lys608. Residue Lys608 is glycosylated (O-linked (Gal...) hydroxylysine). A Hydroxyproline modification is found at Pro614. Lys620 carries the 5-hydroxylysine modification. Lys620 carries an O-linked (Gal...) hydroxylysine glycan. A compositionally biased stretch (low complexity) spans 622 to 631; the sequence is LPGAPGLRGL. Residues Pro623, Pro626, Pro632, Pro644, Pro659, and Pro668 each carry the hydroxyproline modification. The segment covering 656–667 has biased composition (low complexity); the sequence is QGAPGPSGFQGL. The residue at position 670 (Pro670) is a 3-hydroxyproline. Hydroxyproline is present on residues Pro671 and Pro674. The span at 721–736 shows a compositional bias: low complexity; the sequence is LPGTPGTDGPKGAAGP. Residues 764–775 show a composition bias toward basic and acidic residues; sequence KGDRGDVGEKGP. Composition is skewed to low complexity over residues 833-848 and 877-913; these read AGFA…PGAK and PTGV…SNGN. Pro907 is subject to 3-hydroxyproline. Residues Pro908, Pro914, and Pro920 each carry the 4-hydroxyproline modification. Pro residues predominate over residues 1069–1079; the sequence is APGPPGSPGPA. Positions 1091 to 1109 are enriched in low complexity; the sequence is AGAQGPMGPAGPAGARGMP. The segment covering 1115-1129 has biased composition (basic and acidic residues); it reads RGDKGETGEAGERGL. A 5-hydroxylysine modification is found at Lys1130. An O-linked (Gal...) hydroxylysine glycan is attached at Lys1130. Pro1144 bears the 3-hydroxyproline mark. Residues 1148–1157 show a composition bias toward low complexity; sequence SGDQGASGPA. Residue Pro1181 is modified to 4-hydroxyproline. Pro1186 is subject to 3-hydroxyproline. Pro1187 bears the 4-hydroxyproline mark. Residues 1199–1216 show a composition bias toward pro residues; it reads AGPPGNPGPPGPPGPPGP. Residue Pro1201 is modified to 3-hydroxyproline. 4-hydroxyproline occurs at positions 1202 and 1205. Pro1207 carries the post-translational modification 3-hydroxyproline. 2 positions are modified to 4-hydroxyproline: Pro1208 and Pro1211. Pro1213 carries the 3-hydroxyproline modification. A 4-hydroxyproline modification is found at Pro1214. A nonhelical region (C-terminal) region spans residues 1215–1241; that stretch reads GPGIDMSAFAGLGQREKGPDPLQYMRA. Positions 1253–1487 constitute a Fibrillar collagen NC1 domain; it reads AEVDATLKSL…GVDIGPVCFL (235 aa). Intrachain disulfides connect Cys1283–Cys1315, Cys1323–Cys1485, and Cys1393–Cys1438. Residues Asp1301, Asn1303, Gln1304, Cys1306, and Asp1309 each contribute to the Ca(2+) site. N-linked (GlcNAc...) asparagine glycosylation is present at Asn1388.

It belongs to the fibrillar collagen family. As to quaternary structure, homotrimers of alpha 1(II) chains. Probably 3-hydroxylated on prolines by LEPREL1. Proline residues at the third position of the tripeptide repeating unit (G-X-P) are hydroxylated in some or all of the chains. Proline residues at the second position of the tripeptide repeating unit (G-P-X) are hydroxylated in some of the chains. Post-translationally, O-linked glycans consist of Glc-Gal disaccharides bound to the oxygen atom of post-translationally added hydroxyl groups. In terms of processing, contains mostly 4-hydroxyproline. Prolines at the third position of the tripeptide repeating unit (G-X-P) are 4-hydroxylated in some or all of the chains. Contains 3-hydroxyproline at a few sites. This modification occurs on the first proline residue in the sequence motif Gly-Pro-Hyp, where Hyp is 4-hydroxyproline. Post-translationally, lysine residues at the third position of the tripeptide repeating unit (G-X-Y) are 5-hydroxylated in some or all of the chains. In terms of processing, O-glycosylated on hydroxylated lysine residues. The O-linked glycan consists of a Glc-Gal disaccharide.

The protein resides in the secreted. Its subcellular location is the extracellular space. The protein localises to the extracellular matrix. In terms of biological role, type II collagen is specific for cartilaginous tissues. It is essential for the normal embryonic development of the skeleton, for linear growth and for the ability of cartilage to resist compressive forces. In Bos taurus (Bovine), this protein is Collagen alpha-1(II) chain.